The chain runs to 464 residues: tRNA-2-methylthio-N(6)-dimethylallyladenosine synthase (464 aa).

The segment at 1 to 25 (MSDLVPLSRKPAPAAGDPAPSPAAP) is disordered. The 116-residue stretch at 27-142 (RKVYVHTFGC…LPEMVERARG (116 aa)) folds into the MTTase N-terminal domain. Residues C36, C72, C105, C180, C184, and C187 each contribute to the [4Fe-4S] cluster site. The Radical SAM core domain occupies 166 to 398 (ARGRATAFVT…LAAQRRIAGE (233 aa)). The TRAM domain maps to 401–464 (AAELGKVVEV…GGSSLSGTLA (64 aa)).

The protein belongs to the methylthiotransferase family. MiaB subfamily. As to quaternary structure, monomer. [4Fe-4S] cluster is required as a cofactor.

The protein localises to the cytoplasm. It catalyses the reaction N(6)-dimethylallyladenosine(37) in tRNA + (sulfur carrier)-SH + AH2 + 2 S-adenosyl-L-methionine = 2-methylsulfanyl-N(6)-dimethylallyladenosine(37) in tRNA + (sulfur carrier)-H + 5'-deoxyadenosine + L-methionine + A + S-adenosyl-L-homocysteine + 2 H(+). Catalyzes the methylthiolation of N6-(dimethylallyl)adenosine (i(6)A), leading to the formation of 2-methylthio-N6-(dimethylallyl)adenosine (ms(2)i(6)A) at position 37 in tRNAs that read codons beginning with uridine. This is tRNA-2-methylthio-N(6)-dimethylallyladenosine synthase from Anaeromyxobacter dehalogenans (strain 2CP-C).